The following is a 183-amino-acid chain: MGIDINHKHDRKVRRTEVKSQDIYLRLLVKLYRYLARRTNAKFNQIVLRRLFMSRINRPPISVSRLARHMKKPTREGLIAVVVGTVTNDVRLYKIPKMTVAALHVTEKARARILAAGGEILTFDQLALRAPTGKKTVLVQGQRNAREAVRHFGPAPGAPRSHTKPYVRTKGHEKARPSRRANV.

Positions 150 to 183 (RHFGPAPGAPRSHTKPYVRTKGHEKARPSRRANV) are disordered.

Belongs to the eukaryotic ribosomal protein eL18 family.

Its subcellular location is the cytoplasm. This Bombyx mori (Silk moth) protein is Large ribosomal subunit protein eL18 (RpL18).